Reading from the N-terminus, the 329-residue chain is NTD biosynthesis operon regulator NtdR (329 aa).

Residues 2–56 (PTIDEIAKLCNVSKTTVSRVLNNHPYVSKEKRDMILKAINELDYTPNYLARNFRR) form the HTH lacI-type domain. The H-T-H motif DNA-binding region spans 4 to 23 (IDEIAKLCNVSKTTVSRVLN).

Its function is as follows. Positively regulates the ntdABC operon and negatively regulates its own transcription. Binds to NTD to induce ntdABC transcription. The polypeptide is NTD biosynthesis operon regulator NtdR (ntdR) (Bacillus subtilis (strain 168)).